A 127-amino-acid polypeptide reads, in one-letter code: MSANTEAQGSGRGLEAMKWIVVAILLIVAIVGNYLYRDMMLPLRALAVVILIAAAGGVALLTTKGKATVAFAREARTEVRKVIWPTRQETLHTTLIVAAVTAVMSLILWGLDGILVRLVSFITGLRF.

3 helical membrane-spanning segments follow: residues 16–36, 41–61, and 96–116; these read AMKWIVVAILLIVAIVGNYLY, LPLRALAVVILIAAAGGVALL, and IVAAVTAVMSLILWGLDGILV.

This sequence belongs to the SecE/SEC61-gamma family. In terms of assembly, component of the Sec protein translocase complex. Heterotrimer consisting of SecY, SecE and SecG subunits. The heterotrimers can form oligomers, although 1 heterotrimer is thought to be able to translocate proteins. Interacts with the ribosome. Interacts with SecDF, and other proteins may be involved. Interacts with SecA.

The protein localises to the cell inner membrane. Functionally, essential subunit of the Sec protein translocation channel SecYEG. Clamps together the 2 halves of SecY. May contact the channel plug during translocation. This chain is Protein translocase subunit SecE, found in Salmonella typhi.